A 501-amino-acid chain; its full sequence is Archaemetzincin-1 (501 aa).

Histidine 261 lines the Zn(2+) pocket. The active-site Proton acceptor is glutamate 262. Zn(2+) contacts are provided by histidine 265, cysteine 272, cysteine 277, cysteine 296, and cysteine 299. The disordered stretch occupies residues 349–370 (DSGMGCESDTEPVTSPSEPVTP).

Belongs to the peptidase M54 family. It depends on Zn(2+) as a cofactor.

Its function is as follows. Probable zinc metalloprotease. The protein is Archaemetzincin-1 (Amz1) of Rattus norvegicus (Rat).